The sequence spans 159 residues: MESRPSGRQHASEGDGDQSPTQCAGMRSSGRSDQPYVLKGNPLLLRVRCYSGCASGSGRQLQLSVFQDLNQFSHCRVWRSPALIVKGEPPWCSQQDTQSPFQTGTPLERPCFRMKLSGWELTKNAQRALGSKLQHILSLDSTQACGAGGPTILRPPRAP.

The span at 1–13 shows a compositional bias: basic and acidic residues; it reads MESRPSGRQHASE. The tract at residues 1 to 35 is disordered; the sequence is MESRPSGRQHASEGDGDQSPTQCAGMRSSGRSDQP.

This is an uncharacterized protein from Homo sapiens (Human).